Here is a 259-residue protein sequence, read N- to C-terminus: Ribonuclease PH (259 aa).

Phosphate contacts are provided by residues R88 and 126 to 128; that span reads GTR.

It belongs to the RNase PH family. In terms of assembly, homohexameric ring arranged as a trimer of dimers.

The catalysed reaction is tRNA(n+1) + phosphate = tRNA(n) + a ribonucleoside 5'-diphosphate. Functionally, phosphorolytic 3'-5' exoribonuclease that plays an important role in tRNA 3'-end maturation. Removes nucleotide residues following the 3'-CCA terminus of tRNAs; can also add nucleotides to the ends of RNA molecules by using nucleoside diphosphates as substrates, but this may not be physiologically important. Probably plays a role in initiation of 16S rRNA degradation (leading to ribosome degradation) during starvation. This is Ribonuclease PH from Mycobacterium ulcerans (strain Agy99).